The chain runs to 306 residues: tRNA pseudouridine synthase B (306 aa).

Residue D46 is the Nucleophile of the active site.

It belongs to the pseudouridine synthase TruB family. Type 1 subfamily.

The catalysed reaction is uridine(55) in tRNA = pseudouridine(55) in tRNA. Functionally, responsible for synthesis of pseudouridine from uracil-55 in the psi GC loop of transfer RNAs. This Gluconacetobacter diazotrophicus (strain ATCC 49037 / DSM 5601 / CCUG 37298 / CIP 103539 / LMG 7603 / PAl5) protein is tRNA pseudouridine synthase B.